We begin with the raw amino-acid sequence, 612 residues long: Transcription factor ffsR (612 aa).

The segment covering 1-12 has biased composition (polar residues); sequence MDTLTAPTTQSE. Residues 1 to 21 are disordered; that stretch reads MDTLTAPTTQSEQPPPPLTAS. A DNA-binding region (zn(2)-C6 fungal-type) is located at residues 28 to 60; that stretch reads CDRCRSHKLRCNRDLMTSTNSPCQRCRKARVKC. Basic and acidic residues predominate over residues 73–82; sequence EELKNGENVH. 3 disordered regions span residues 73–130, 154–249, and 451–470; these read EELK…SMSG, DGST…VTSS, and GQGP…TTTN. 3 stretches are compositionally biased toward polar residues: residues 92-103, 154-169, and 238-249; these read SHRTASTPSNHA, DGST…TNGS, and LTQQHPAGVTSS. The segment covering 458–470 has biased composition (low complexity); it reads PSQGSSSRSTTTN.

The protein resides in the nucleus. Functionally, transcription factor that specifically regulates the expression of the gene cluster that mediates the biosynthesis of the cytotoxic leucine-containing cytochalasans, including aspochalasin C, aspochalasin E, TMC-169, flavichalasine F, aspergillin PZ, aspochalasin M and flavichalasine G. This chain is Transcription factor ffsR, found in Aspergillus flavipes.